The sequence spans 192 residues: Probable GTP-binding protein EngB (192 aa).

In terms of domain architecture, EngB-type G spans 22-192 (GRPEIVFVGR…LLERLDLFSQ (171 aa)). GTP-binding positions include 30–37 (GRSNVGKS), 57–61 (GKTRL), 75–78 (DLPG), 142–145 (TKWD), and 172–174 (YSS). 2 residues coordinate Mg(2+): Ser-37 and Thr-59.

This sequence belongs to the TRAFAC class TrmE-Era-EngA-EngB-Septin-like GTPase superfamily. EngB GTPase family. Mg(2+) serves as cofactor.

In terms of biological role, necessary for normal cell division and for the maintenance of normal septation. This chain is Probable GTP-binding protein EngB, found in Chlorobaculum parvum (strain DSM 263 / NCIMB 8327) (Chlorobium vibrioforme subsp. thiosulfatophilum).